Here is a 395-residue protein sequence, read N- to C-terminus: Multidrug resistance protein MdtL (395 aa).

12 helical membrane-spanning segments follow: residues 4–24 (FLLC…MYLV), 42–62 (IAFS…GKIA), 69–89 (PVAI…SRAS), 93–113 (LFLS…VVAF), 131–151 (LLNG…HLIM), 158–178 (SLFY…LFIL), 217–237 (VSVI…VMGF), 247–267 (ALTA…LGLF), 271–291 (TLML…SLAH), 295–315 (VTLF…GVAM), 328–350 (VASS…LAAI), and 355–377 (AMNM…IFSV).

It belongs to the major facilitator superfamily. DHA1 family. MdtL (TC 2.A.1.2.22) subfamily.

It localises to the cell inner membrane. This chain is Multidrug resistance protein MdtL, found in Salmonella dublin (strain CT_02021853).